The chain runs to 434 residues: Trigger factor (434 aa).

In terms of domain architecture, PPIase FKBP-type spans 160–245; that stretch reads GDKAKINFVG…LNEVQAANLP (86 aa).

It belongs to the FKBP-type PPIase family. Tig subfamily.

The protein resides in the cytoplasm. The enzyme catalyses [protein]-peptidylproline (omega=180) = [protein]-peptidylproline (omega=0). In terms of biological role, involved in protein export. Acts as a chaperone by maintaining the newly synthesized protein in an open conformation. Functions as a peptidyl-prolyl cis-trans isomerase. The polypeptide is Trigger factor (Shewanella halifaxensis (strain HAW-EB4)).